Consider the following 216-residue polypeptide: Maintenance of carboxysome distribution protein A (216 aa).

Positions 16, 17, 19, 20, 21, 22, and 45 each coordinate ATP. A Mg(2+)-binding site is contributed by T21.

This sequence belongs to the ParA family. McdA subfamily. Self-associates, associates with McdB.

It localises to the cytoplasm. The protein localises to the nucleoid. The catalysed reaction is ATP + H2O = ADP + phosphate + H(+). Its function is as follows. McdA and McdB together mediate carboxysome positioning on the nucleoid and prevent their aggregation in the cell. McdA is an ATPase that forms dynamic gradients on the nucleoid in response to adapter protein McdB, which associates with carboxysomes. The interplay between McdA gradients on the nucleoid and McdB-bound carboxysomes result in the equal spacing of Cbs along the cell length. Incorrect positioning (aggregation) of carboxysomes results in reduced CO(2) fixation by encapsulated form 1 ribulose-1,5-bisphosphate carboxylase (RuBisCO, cbbL/cbbS), which leads to slower growth. In Halothiobacillus neapolitanus (strain ATCC 23641 / c2) (Thiobacillus neapolitanus), this protein is Maintenance of carboxysome distribution protein A.